Reading from the N-terminus, the 469-residue chain is MTQDGTWSDESDWELDDADLADLAEAAPAPVLAIVGRPNVGKSTLVNRILGRREAVVQDIPGVTRDRVSYDALWNGRRFVVQDTGGWEPDAKGLQQLVAEQASVAMRTADAVVLVVDATVGATTADEAAARILLRSGKPVFLAANKVDSDKAEADAATLWSMGLGEPHAISAMHGRGVADLLDTVLKKLPEVAESVSAGGGPRRVALVGKPNVGKSSLLNKLAGDERSVVHDVAGTTVDPVDSLIELGGKVWRFVDTAGLRRKVGQASGHEFYASVRTRGAIDAAEVVVLLIDASQPLTEQDLRVLSMVIEAGRAVVLAYNKWDLVDEDRRDLLDREIDRELVQIRWAQRVNISAKTGRAVQKLVPAMETALASWDTRIPTGPLNSWIKEVVAATPPPVRGGKQPRILFATQATARPPTFVLFTTGFLEAGYRRFLERRLRETFGFEGSPIRINVRVREKRGAKRPGRR.

EngA-type G domains lie at 30 to 193 and 203 to 376; these read PVLA…PEVA and RRVA…ASWD. Residues 36–43, 83–87, 145–148, 209–216, 256–260, and 321–324 contribute to the GTP site; these read GRPNVGKS, DTGGW, NKVD, GKPNVGKS, DTAGL, and NKWD. The region spanning 377–459 is the KH-like domain; the sequence is TRIPTGPLNS…PIRINVRVRE (83 aa).

Belongs to the TRAFAC class TrmE-Era-EngA-EngB-Septin-like GTPase superfamily. EngA (Der) GTPase family. In terms of assembly, associates with the 50S ribosomal subunit.

Its function is as follows. GTPase that plays an essential role in the late steps of ribosome biogenesis. The protein is GTPase Der of Mycobacterium marinum (strain ATCC BAA-535 / M).